Reading from the N-terminus, the 371-residue chain is tRNA (guanine(26)-N(2))-dimethyltransferase (371 aa).

The 365-residue stretch at 4–368 (VEVTEGRTRF…APLPVLEKVV (365 aa)) folds into the Trm1 methyltransferase domain. Residues arginine 41, arginine 66, aspartate 82, aspartate 108, and alanine 109 each coordinate S-adenosyl-L-methionine. Zn(2+)-binding residues include cysteine 237, cysteine 240, cysteine 256, and cysteine 259.

The protein belongs to the class I-like SAM-binding methyltransferase superfamily. Trm1 family.

It catalyses the reaction guanosine(26) in tRNA + 2 S-adenosyl-L-methionine = N(2)-dimethylguanosine(26) in tRNA + 2 S-adenosyl-L-homocysteine + 2 H(+). Its function is as follows. Dimethylates a single guanine residue at position 26 of a number of tRNAs using S-adenosyl-L-methionine as donor of the methyl groups. This Methanoculleus marisnigri (strain ATCC 35101 / DSM 1498 / JR1) protein is tRNA (guanine(26)-N(2))-dimethyltransferase.